A 1369-amino-acid polypeptide reads, in one-letter code: ATP-dependent RNA helicase DHX29 (1369 aa).

Disordered regions lie at residues 27 to 75 and 176 to 226; these read SAEA…TNDS and SQEF…KNME. 3 positions are modified to phosphoserine: S71, S192, and S200. Positions 189-201 are enriched in polar residues; sequence KFQSPQIQATISP. The span at 208-226 shows a compositional bias: basic and acidic residues; sequence KTYEEDPKSKPKKEEKNME. Coiled-coil stretches lie at residues 222 to 256, 283 to 310, and 492 to 519; these read EKNM…EEEE, LEKN…LEDH, and IAKL…NSED. The segment at 502 to 526 is disordered; that stretch reads QQQQQQQHSENKRENSEDPEESWEN. A Helicase ATP-binding domain is found at 582–755; that stretch reads VETLKRHRVV…FTHCPILRIS (174 aa). ATP is bound at residue 595–602; it reads GETGSGKS. The DEAH box signature appears at 702–705; that stretch reads DEVH. The region spanning 849–1026 is the Helicase C-terminal domain; sequence LILELLAYLD…ELCLHIMKCN (178 aa).

Belongs to the DEAD box helicase family. DEAH subfamily. Part of the 43S pre-initiation complex (PIC) that contains at least Met-tRNA, EIF1, EIF1A (EIF1AX or EIF1AY), EIF2S1, EIF2S2, EIF2S3, EIF3A, EIF3B, EIF3C, EIF3D, EIF3E, EIF3F, EIF3G, EIF3H, EIF3I, EIF3J, EIF3K, EIF3L, EIF3M, DHX29 and the 40S ribosomal subunit.

Its subcellular location is the cytoplasm. The catalysed reaction is ATP + H2O = ADP + phosphate + H(+). Its function is as follows. ATP-binding RNA helicase involved in translation initiation. Part of the 43S pre-initiation complex that is required for efficient initiation on mRNAs of higher eukaryotes with structured 5'-UTRs by promoting efficient NTPase-dependent 48S complex formation. Specifically binds to the 40S ribosome near the mRNA entrance. Does not possess a processive helicase activity. The polypeptide is ATP-dependent RNA helicase DHX29 (Homo sapiens (Human)).